Consider the following 172-residue polypeptide: 3-phenylpropionate/cinnamic acid dioxygenase subunit beta (172 aa).

Belongs to the bacterial ring-hydroxylating dioxygenase beta subunit family. As to quaternary structure, this dioxygenase system consists of four proteins: the two subunits of the hydroxylase component (HcaE and HcaF), a ferredoxin (HcaC) and a ferredoxin reductase (HcaD).

It carries out the reaction 3-phenylpropanoate + NADH + O2 + H(+) = 3-(cis-5,6-dihydroxycyclohexa-1,3-dien-1-yl)propanoate + NAD(+). The catalysed reaction is (E)-cinnamate + NADH + O2 + H(+) = (2E)-3-(cis-5,6-dihydroxycyclohexa-1,3-dien-1-yl)prop-2-enoate + NAD(+). The protein operates within aromatic compound metabolism; 3-phenylpropanoate degradation. Its function is as follows. Part of the multicomponent 3-phenylpropionate dioxygenase. Converts 3-phenylpropionic acid (PP) and cinnamic acid (CI) into 3-phenylpropionate-dihydrodiol (PP-dihydrodiol) and cinnamic acid-dihydrodiol (CI-dihydrodiol), respectively. The sequence is that of 3-phenylpropionate/cinnamic acid dioxygenase subunit beta from Shigella boydii serotype 4 (strain Sb227).